Consider the following 180-residue polypeptide: MSRKKKSRKPGAAGAPEFVVTRNRTESDVEGRLRKRAKKRKGLKTGSRNSEVNEQKKQSSEQNRDPRLGSKKKIPLIVEPVKKMTKQERRLSAEQELEMLENDAQLNVLLDRIEAGENLGTGLQKYVDEKLDRIEKLMDQLGLLEPEEEEDFTASSAKGSRNDDDLLADFDDINFDDYKG.

2 disordered regions span residues 1–87 and 142–180; these read MSRK…MTKQ and GLLE…DYKG. The span at 23–32 shows a compositional bias: basic and acidic residues; the sequence is NRTESDVEGR. The span at 33-43 shows a compositional bias: basic residues; sequence LRKRAKKRKGL. A compositionally biased stretch (basic and acidic residues) spans 51 to 68; that stretch reads EVNEQKKQSSEQNRDPRL. Residues 165–180 are compositionally biased toward acidic residues; sequence DLLADFDDINFDDYKG.

This sequence belongs to the YihI family. Interacts with Der.

Functionally, a GTPase-activating protein (GAP) that modifies Der/EngA GTPase function. May play a role in ribosome biogenesis. This chain is Der GTPase-activating protein YihI, found in Vibrio parahaemolyticus serotype O3:K6 (strain RIMD 2210633).